A 490-amino-acid chain; its full sequence is tRNA-2-methylthio-N(6)-dimethylallyladenosine synthase (490 aa).

Residues 37-154 (KKVYIATQGC…LPELYDKSTT (118 aa)) form the MTTase N-terminal domain. Positions 46, 83, 117, 198, 202, and 205 each coordinate [4Fe-4S] cluster. In terms of domain architecture, Radical SAM core spans 184 to 416 (KVEGYRAFVS…QKVIRDSTLK (233 aa)). The TRAM domain maps to 419–487 (EEMVGKTLRV…PHMVRGELVD (69 aa)).

It belongs to the methylthiotransferase family. MiaB subfamily. As to quaternary structure, monomer. Requires [4Fe-4S] cluster as cofactor.

The protein resides in the cytoplasm. It carries out the reaction N(6)-dimethylallyladenosine(37) in tRNA + (sulfur carrier)-SH + AH2 + 2 S-adenosyl-L-methionine = 2-methylsulfanyl-N(6)-dimethylallyladenosine(37) in tRNA + (sulfur carrier)-H + 5'-deoxyadenosine + L-methionine + A + S-adenosyl-L-homocysteine + 2 H(+). In terms of biological role, catalyzes the methylthiolation of N6-(dimethylallyl)adenosine (i(6)A), leading to the formation of 2-methylthio-N6-(dimethylallyl)adenosine (ms(2)i(6)A) at position 37 in tRNAs that read codons beginning with uridine. In Psychrobacter sp. (strain PRwf-1), this protein is tRNA-2-methylthio-N(6)-dimethylallyladenosine synthase.